Reading from the N-terminus, the 865-residue chain is Protein translocase subunit SecA (865 aa).

ATP is bound by residues glutamine 93, 111 to 115 (GEGKT), and aspartate 501. Positions 841, 843, 852, and 853 each coordinate Zn(2+).

It belongs to the SecA family. Monomer and homodimer. Part of the essential Sec protein translocation apparatus which comprises SecA, SecYEG and auxiliary proteins SecDF-YajC and YidC. Requires Zn(2+) as cofactor.

The protein resides in the cell inner membrane. It localises to the cytoplasm. It catalyses the reaction ATP + H2O + cellular proteinSide 1 = ADP + phosphate + cellular proteinSide 2.. In terms of biological role, part of the Sec protein translocase complex. Interacts with the SecYEG preprotein conducting channel. Has a central role in coupling the hydrolysis of ATP to the transfer of proteins into and across the cell membrane, serving as an ATP-driven molecular motor driving the stepwise translocation of polypeptide chains across the membrane. This is Protein translocase subunit SecA from Helicobacter pylori (strain J99 / ATCC 700824) (Campylobacter pylori J99).